Here is a 464-residue protein sequence, read N- to C-terminus: uncharacterized protein (464 aa).

The first 24 residues, 1 to 24 (MSRFVPRIIPFYLLLLVAGGTANA), serve as a signal peptide directing secretion.

The protein belongs to the intimin/invasin family.

It localises to the periplasm. This is an uncharacterized protein from Escherichia coli (strain K12).